Reading from the N-terminus, the 428-residue chain is Enolase (428 aa).

A (2R)-2-phosphoglycerate-binding site is contributed by glutamine 163. Glutamate 205 acts as the Proton donor in catalysis. Aspartate 242, glutamate 285, and aspartate 312 together coordinate Mg(2+). Residues lysine 337, arginine 366, serine 367, and lysine 388 each coordinate (2R)-2-phosphoglycerate. The active-site Proton acceptor is the lysine 337.

The protein belongs to the enolase family. The cofactor is Mg(2+).

Its subcellular location is the cytoplasm. The protein localises to the secreted. It localises to the cell surface. The catalysed reaction is (2R)-2-phosphoglycerate = phosphoenolpyruvate + H2O. It participates in carbohydrate degradation; glycolysis; pyruvate from D-glyceraldehyde 3-phosphate: step 4/5. Its function is as follows. Catalyzes the reversible conversion of 2-phosphoglycerate (2-PG) into phosphoenolpyruvate (PEP). It is essential for the degradation of carbohydrates via glycolysis. The chain is Enolase from Carboxydothermus hydrogenoformans (strain ATCC BAA-161 / DSM 6008 / Z-2901).